We begin with the raw amino-acid sequence, 1522 residues long: Sodium channel protein 1 brain (1522 aa).

The Cytoplasmic portion of the chain corresponds to 1–50; that stretch reads MDEKYTAKNRDKTFVVIEKRFKKNIIHRFSAKRSLFLFTPRNPIRRLAVC. Residues 41–342 form an I repeat; sequence RNPIRRLAVC…VATAYELEVK (302 aa). Residues 51 to 70 form a helical membrane-spanning segment; it reads IATNVCFDYFLMFTIMINCV. Residues 71–77 lie on the Extracellular side of the membrane; sequence FLAMPDI. Residues 78 to 99 form a helical membrane-spanning segment; the sequence is SEFAEYIFLGIYTMEMAIKLVA. Topologically, residues 100 to 112 are cytoplasmic; sequence GGFFIDKYTYLRD. A helical transmembrane segment spans residues 113–134; the sequence is AWNCLDFTVIMISYITLLLQTI. Topologically, residues 135–143 are extracellular; it reads NDKVISDIT. A helical; Voltage-sensor transmembrane segment spans residues 144 to 167; that stretch reads GLRTFRVLRALRTLSIIPGLKTMV. Over 168-179 the chain is Cytoplasmic; the sequence is NALLRALRMLIS. A helical membrane pass occupies residues 180 to 201; sequence VLILILFCLWIFSQAGVQLFGG. At 202–278 the chain is on the extracellular side; sequence ALRHKCVLQI…PNYGYTNFDS (77 aa). An intrachain disulfide couples Cys-207 to Cys-255. Asn-248 and Asn-258 each carry an N-linked (GlcNAc...) asparagine glycan. Residues 279–303 constitute an intramembrane region (pore-forming); the sequence is IGWSMLISFQLLTQDYWEDVYNKVI. The Extracellular portion of the chain corresponds to 304 to 308; it reads RAHSP. A helical transmembrane segment spans residues 309 to 331; it reads WTVIYFIVINFFGSLYLMNLMLA. Residues 332–406 lie on the Cytoplasmic side of the membrane; the sequence is VVATAYELEV…WLRVQSFAHC (75 aa). One copy of the II repeat lies at 393 to 647; the sequence is CYNPWLRVQS…EQEVEVSSFA (255 aa). Residues 407–426 form a helical membrane-spanning segment; it reads IITDSFTEVFIIFIIVLNTV. At 427 to 442 the chain is on the extracellular side; that stretch reads FLAMEHHGMSMELKNV. The helical transmembrane segment at 443–464 threads the bilayer; it reads LKVANYVFTTVFVLEAILKLLA. At 465-472 the chain is on the cytoplasmic side; the sequence is FNKQYFKS. The helical transmembrane segment at 473-491 threads the bilayer; that stretch reads GWNICDLVVVVASLIDLGV. At 492–498 the chain is on the extracellular side; the sequence is EGLKGVS. The chain crosses the membrane as a helical; Voltage-sensor span at residues 499 to 522; the sequence is VFRSFRLLRVFHLAQSWTTMRLLL. Topologically, residues 523 to 531 are cytoplasmic; the sequence is CIILNTLGS. A helical membrane pass occupies residues 532 to 553; the sequence is LGYLTIILIIVIYIFAVTGLQL. Residues 554 to 575 lie on the Extracellular side of the membrane; that stretch reads FHTEYTPDKFRGEPVPRWNFND. Residues 576–596 constitute an intramembrane region (pore-forming); the sequence is FLHSFMMVFRILCGEWIEPMY. Residues 597–607 lie on the Extracellular side of the membrane; that stretch reads DCMRACNGLCF. A disulfide bridge links Cys-598 with Cys-606. The helical transmembrane segment at 608-628 threads the bilayer; the sequence is LIFIPVTVFGKTLFFLFIGLV. The Cytoplasmic portion of the chain corresponds to 629-777; that stretch reads LGAFGSDTVE…WNNFRRQLMM (149 aa). The III repeat unit spans residues 770–1074; it reads NFRRQLMMVC…QNYYNTLKKL (305 aa). The chain crosses the membrane as a helical span at residues 778 to 797; sequence VCENKYFETGVLVIIFASSI. The Extracellular portion of the chain corresponds to 798-815; it reads LLAFEDIYLNEKPRLKLA. A helical membrane pass occupies residues 816–837; it reads IFYLDITFCLLFFLEMVLKLVA. At 838 to 846 the chain is on the cytoplasmic side; it reads LGFVHYYTH. Residues 847–868 form a helical membrane-spanning segment; sequence FWTILDFTIVIITVISLAASGL. At 869-874 the chain is on the extracellular side; it reads GMEQIT. A helical; Voltage-sensor transmembrane segment spans residues 875 to 898; sequence AFRSLRTLRALRPLRAVSRWQGMK. Topologically, residues 899–915 are cytoplasmic; it reads IIVNALMLSIPSIFNVL. A helical membrane pass occupies residues 916–937; it reads LVCVVFWLIFAIMGVQLFAGKF. Residues 938 to 976 are Extracellular-facing; sequence YKCVNETNMRIPPTEVANKIECYNKNYTWVNSNVNFDNV. N-linked (GlcNAc...) asparagine glycans are attached at residues Asn-942 and Asn-963. The pore-forming intramembrane region spans 977–998; sequence GGAFLALFQVATFEGWMEIMAD. The Extracellular segment spans residues 999 to 1009; it reads AVDVTEVDEQP. Residues 1010–1022 traverse the membrane as a helical segment; the sequence is KFEATVYYYFYFV. At 1023 to 1100 the chain is on the cytoplasmic side; it reads LFIIFGSFFV…QAVVYDLVMS (78 aa). Thr-1076 carries the post-translational modification Phosphothreonine; by PKC. One copy of the IV repeat lies at 1083–1386; sequence VKRPKNKCQA…WEQYDPLATQ (304 aa). The helical transmembrane segment at 1101–1120 threads the bilayer; the sequence is NQFEIFITTIIITNMIFMAF. At 1121–1132 the chain is on the extracellular side; that stretch reads EHYNQSEVVTEV. A glycan (N-linked (GlcNAc...) asparagine) is linked at Asn-1124. Residues 1133–1154 traverse the membrane as a helical segment; it reads LATANIAFTILYAVEAIIKIIG. Over 1155–1162 the chain is Cytoplasmic; the sequence is LRIHYLRN. The helical transmembrane segment at 1163 to 1184 threads the bilayer; that stretch reads LWNVFDFLVVTLSVMDAFLNDI. At 1185–1194 the chain is on the extracellular side; sequence FGDGIFMNPS. The helical; Voltage-sensor transmembrane segment at 1195–1218 threads the bilayer; sequence LLRVARMFRIGRIIRLIKWAKGMR. The Cytoplasmic segment spans residues 1219–1236; that stretch reads KLLFALVISLPALFNIGA. Residues 1237 to 1258 form a helical membrane-spanning segment; the sequence is LLMLVMFIYTIIGMSSFGQIKL. The Extracellular portion of the chain corresponds to 1259–1270; that stretch reads SGALNDQVNFQT. Residues 1271 to 1293 constitute an intramembrane region (pore-forming); the sequence is FGKTFLLLVRLATSAGWNDILGP. At 1294–1323 the chain is on the extracellular side; that stretch reads LLIQPPNCDPNYITTSTGEKIKVVNGDCGM. The chain crosses the membrane as a helical span at residues 1324 to 1346; that stretch reads PWLAISYMVSYIIIVFMIVFNMY. The Cytoplasmic portion of the chain corresponds to 1347-1522; it reads IAVILENFNQ…FIISAPETAV (176 aa).

Belongs to the sodium channel (TC 1.A.1.10) family.

The protein resides in the cell membrane. In terms of biological role, mediates the voltage-dependent sodium ion permeability of excitable membranes. Assuming opened or closed conformations in response to the voltage difference across the membrane, the protein forms a sodium-selective channel through which Na(+) ions may pass in accordance with their electrochemical gradient. This Heterololigo bleekeri (Spear squid) protein is Sodium channel protein 1 brain.